A 914-amino-acid chain; its full sequence is TRPM8 channel-associated factor 2 (914 aa).

The 300-residue stretch at 541-840 folds into the Peptidase M60 domain; it reads DAWMSTGLNL…TYLQLQEAFG (300 aa).

This sequence belongs to the TCAF family. Interacts with TRPM8 (via N-terminus and C-terminus domains); the interaction inhibits TRPM8 channel activity. Interacts with TRPV6.

Its subcellular location is the cell membrane. Functionally, negatively regulates the plasma membrane cation channel TRPM8 activity. Involved in the recruitment of TRPM8 to the cell surface. Promotes prostate cancer cell migration stimulation in a TRPM8-dependent manner. The chain is TRPM8 channel-associated factor 2 from Bos taurus (Bovine).